Consider the following 1241-residue polypeptide: ATP-dependent helicase/nuclease subunit A (1241 aa).

The 474-residue stretch at Ser-12–Arg-485 folds into the UvrD-like helicase ATP-binding domain. Position 33 to 40 (Ala-33 to Thr-40) interacts with ATP. The 301-residue stretch at Gly-505 to Gly-805 folds into the UvrD-like helicase C-terminal domain.

The protein belongs to the helicase family. AddA subfamily. As to quaternary structure, heterodimer of AddA and AddB/RexB. The cofactor is Mg(2+).

The enzyme catalyses Couples ATP hydrolysis with the unwinding of duplex DNA by translocating in the 3'-5' direction.. It carries out the reaction ATP + H2O = ADP + phosphate + H(+). In terms of biological role, the heterodimer acts as both an ATP-dependent DNA helicase and an ATP-dependent, dual-direction single-stranded exonuclease. Recognizes the chi site generating a DNA molecule suitable for the initiation of homologous recombination. The AddA nuclease domain is required for chi fragment generation; this subunit has the helicase and 3' -&gt; 5' nuclease activities. The sequence is that of ATP-dependent helicase/nuclease subunit A from Bacillus thuringiensis (strain Al Hakam).